We begin with the raw amino-acid sequence, 933 residues long: Protein inturned (933 aa).

The interval 1–54 is disordered; that stretch reads MASLPLCGSVRSPEGLPGDPSSQEDRQDYDPEDPVSGSGSYSPTSTDSNDLEPE. Positions 37–48 are enriched in polar residues; sequence GSGSYSPTSTDS. The PDZ domain maps to 186 to 264; sequence LVGIIHQTKW…PMQVKLTFEN (79 aa). Ser675 bears the Phosphoserine mark. The segment at 703–742 is disordered; sequence LKTRKPSPSRSGGPDSGLEGEGVGLSPHTTESQGSHGSEE. Over residues 710–719 the composition is skewed to low complexity; sequence PSRSGGPDSG. Residues 729–738 are compositionally biased toward polar residues; it reads PHTTESQGSH.

It belongs to the inturned family. As to quaternary structure, component of the CPLANE (ciliogenesis and planar polarity effectors) complex, composed of INTU, FUZ and WDPCP. Interacts with CPLANE1. Interacts with NPHP4 and DAAM1; INTU is mediating the interaction between NPHP4 and DAAM1.

It is found in the cytoplasm. The protein localises to the cell surface. It localises to the cytoskeleton. Its subcellular location is the cilium basal body. The protein resides in the microtubule organizing center. It is found in the centrosome. The protein localises to the centriole. Its function is as follows. Plays a key role in ciliogenesis and embryonic development. Regulator of cilia formation by controlling the organization of the apical actin cytoskeleton and the positioning of the basal bodies at the apical cell surface, which in turn is essential for the normal orientation of elongating ciliary microtubules. Plays a key role in definition of cell polarity via its role in ciliogenesis but not via conversion extension. Has an indirect effect on hedgehog signaling. Proposed to function as core component of the CPLANE (ciliogenesis and planar polarity effectors) complex involved in the recruitment of peripheral IFT-A proteins to basal bodies. Required for recruitment of CPLANE2 to the mother centriole. Binds phosphatidylinositol 3-phosphate with highest affinity, followed by phosphatidylinositol 4-phosphate and phosphatidylinositol 5-phosphate. In Bos taurus (Bovine), this protein is Protein inturned (INTU).